Reading from the N-terminus, the 757-residue chain is Polyribonucleotide nucleotidyltransferase (757 aa).

Asp532 and Asp538 together coordinate Mg(2+). Positions 598–657 (PRVTAIKVPVDKIGEVIGPKGKMINSITEQTGANISIEDDGTVFVGATDGPSAQAAIDMI) constitute a KH domain. Residues 669–738 (GERFLGTVVK…NRGKISLIPV (70 aa)) form the S1 motif domain.

Belongs to the polyribonucleotide nucleotidyltransferase family. The cofactor is Mg(2+).

It localises to the cytoplasm. The enzyme catalyses RNA(n+1) + phosphate = RNA(n) + a ribonucleoside 5'-diphosphate. In terms of biological role, involved in mRNA degradation. Catalyzes the phosphorolysis of single-stranded polyribonucleotides processively in the 3'- to 5'-direction. In Rhodococcus jostii (strain RHA1), this protein is Polyribonucleotide nucleotidyltransferase.